The sequence spans 152 residues: 1,4-dihydroxy-2-naphthoyl-CoA hydrolase (152 aa).

Asp20 is an active-site residue.

The protein belongs to the 4-hydroxybenzoyl-CoA thioesterase family. DHNA-CoA hydrolase subfamily.

It carries out the reaction 1,4-dihydroxy-2-naphthoyl-CoA + H2O = 1,4-dihydroxy-2-naphthoate + CoA + H(+). Its pathway is cofactor biosynthesis; phylloquinone biosynthesis. It functions in the pathway quinol/quinone metabolism; 1,4-dihydroxy-2-naphthoate biosynthesis; 1,4-dihydroxy-2-naphthoate from chorismate: step 7/7. Functionally, catalyzes the hydrolysis of 1,4-dihydroxy-2-naphthoyl-CoA (DHNA-CoA) to 1,4-dihydroxy-2-naphthoate (DHNA), a reaction involved in phylloquinone (vitamin K1) biosynthesis. The protein is 1,4-dihydroxy-2-naphthoyl-CoA hydrolase of Parasynechococcus marenigrum (strain WH8102).